Consider the following 1522-residue polypeptide: Lysophospholipase NTE1 (1522 aa).

Residues 1–73 (MVDGTYVNSS…SLLVYLINGT (73 aa)) lie on the Lumenal side of the membrane. A helical membrane pass occupies residues 74–94 (VPFYLVVLGSVFTPIIVYLIL). Residues 95 to 1522 (RSRVLSAYSR…IHLLHRRNSI (1428 aa)) are Cytoplasmic-facing. Disordered regions lie at residues 443 to 468 (SVQE…TPNK), 485 to 523 (DLLS…ASSP), and 535 to 556 (SQNF…PSVV). Low complexity-rich tracts occupy residues 498-511 (KTAS…PRIS) and 540-555 (PLSS…KPSV). A nucleoside 3',5'-cyclic phosphate is bound by residues 661-782 (PINV…LTKL) and 778-918 (TLTK…VAHK). Disordered regions lie at residues 828–852 (QKSK…DNQP) and 1125–1145 (SSQN…GAPP). The 165-residue stretch at 1219-1383 (LVLGGGGARG…LDNLPVLEMK (165 aa)) folds into the PNPLA domain. A GXGXXG motif is present at residues 1223–1228 (GGGARG). The short motif at 1250–1254 (GTSIG) is the GXSXG element. Ser-1252 (nucleophile) is an active-site residue. Asp-1370 functions as the Proton acceptor in the catalytic mechanism. The DGA/G motif lies at 1370–1372 (DGG).

Belongs to the NTE family.

It is found in the endoplasmic reticulum membrane. It catalyses the reaction a 1-acyl-sn-glycero-3-phosphocholine + H2O = sn-glycerol 3-phosphocholine + a fatty acid + H(+). With respect to regulation, inhibited by organophosphorus esters. Its function is as follows. Intracellular phospholipase B that catalyzes the double deacylation of phosphatidylcholine (PC) to glycerophosphocholine (GroPCho). Plays an important role in membrane lipid homeostasis. Responsible for the rapid PC turnover in response to inositol, elevated temperatures, or when choline is present in the growth medium. In Eremothecium gossypii (strain ATCC 10895 / CBS 109.51 / FGSC 9923 / NRRL Y-1056) (Yeast), this protein is Lysophospholipase NTE1 (NTE1).